Consider the following 338-residue polypeptide: Sorting nexin-15 (338 aa).

The region spanning 1–131 (MSRRAKKDDF…EFFRGGEVTR (131 aa)) is the PX domain. A 1,2-diacyl-sn-glycero-3-phospho-(1D-myo-inositol-3-phosphate)-binding residues include Arg52, Ser54, Arg88, and Arg97. Residue Arg106 is modified to Omega-N-methylarginine. A disordered region spans residues 134 to 155 (EVSRDLQILPPPLIPTPPSDEA). Over residues 142–151 (LPPPLIPTPP) the composition is skewed to pro residues. Residues Ser202 and Ser228 each carry the phosphoserine modification. Residues 240 to 270 (VQSKRLDQEPWEPGGREEEEAEDGDPAPAYL) are disordered. Residues 266 to 338 (APAYLGQATE…RAETLHAHLP (73 aa)) form the MIT domain.

The protein belongs to the sorting nexin family. Homodimer. Interacts with SNX1, SNX2 and SNX4.

It localises to the cytoplasm. The protein resides in the membrane. It is found in the cytoplasmic vesicle membrane. In terms of biological role, may be involved in several stages of intracellular trafficking. Overexpression of SNX15 disrupts the normal trafficking of proteins from the plasma membrane to recycling endosomes or the TGN. The polypeptide is Sorting nexin-15 (Snx15) (Rattus norvegicus (Rat)).